The primary structure comprises 150 residues: Deoxyuridine 5'-triphosphate nucleotidohydrolase (150 aa).

Substrate is bound by residues 69-71 (RSG), Asn82, 86-88 (LID), and Lys96.

Belongs to the dUTPase family. Mg(2+) is required as a cofactor.

The catalysed reaction is dUTP + H2O = dUMP + diphosphate + H(+). It participates in pyrimidine metabolism; dUMP biosynthesis; dUMP from dCTP (dUTP route): step 2/2. Its function is as follows. This enzyme is involved in nucleotide metabolism: it produces dUMP, the immediate precursor of thymidine nucleotides and it decreases the intracellular concentration of dUTP so that uracil cannot be incorporated into DNA. This Neisseria gonorrhoeae (strain ATCC 700825 / FA 1090) protein is Deoxyuridine 5'-triphosphate nucleotidohydrolase.